The chain runs to 837 residues: Anaphase-promoting complex subunit 2 (837 aa).

Residues Ser-233, Ser-329, Ser-485, Ser-549, and Ser-712 each carry the phosphoserine modification. The segment at Cys-478–Ser-508 is disordered. Over residues Gln-483 to Val-496 the composition is skewed to acidic residues. Tyr-825 bears the Phosphotyrosine mark.

This sequence belongs to the cullin family. As to quaternary structure, the mammalian APC/C is composed at least of 14 distinct subunits ANAPC1, ANAPC2, CDC27/APC3, ANAPC4, ANAPC5, CDC16/APC6, ANAPC7, CDC23/APC8, ANAPC10, ANAPC11, CDC26/APC12, ANAPC13, ANAPC15 and ANAPC16 that assemble into a complex of at least 19 chains with a combined molecular mass of around 1.2 MDa; APC/C interacts with FZR1 and FBXO5. In the context of the APC/C complex, directly interacts with UBE2C and UBE2S. Interacts (via cullin domain) with ANAPC11 and with UBCH10. Interacts with NEUROD2. Interacts with FBXO43; the interaction is direct.

The protein operates within protein modification; protein ubiquitination. Its function is as follows. Together with the RING-H2 protein ANAPC11, constitutes the catalytic component of the anaphase promoting complex/cyclosome (APC/C), a cell cycle-regulated E3 ubiquitin ligase that controls progression through mitosis and the G1 phase of the cell cycle. The APC/C complex acts by mediating ubiquitination and subsequent degradation of target proteins: it mainly mediates the formation of 'Lys-11'-linked polyubiquitin chains and, to a lower extent, the formation of 'Lys-48'- and 'Lys-63'-linked polyubiquitin chains. The APC/C complex catalyzes assembly of branched 'Lys-11'-/'Lys-48'-linked branched ubiquitin chains on target proteins. The CDC20-APC/C complex positively regulates the formation of synaptic vesicle clustering at active zone to the presynaptic membrane in postmitotic neurons. CDC20-APC/C-induced degradation of NEUROD2 drives presynaptic differentiation. In Mus musculus (Mouse), this protein is Anaphase-promoting complex subunit 2 (Anapc2).